Consider the following 858-residue polypeptide: Leucine--tRNA ligase (858 aa).

The 'HIGH' region motif lies at 42-52 (PYPSGRLHMGH). The 'KMSKS' region signature appears at 618 to 622 (KMSKS). Lys621 contacts ATP.

The protein belongs to the class-I aminoacyl-tRNA synthetase family.

The protein localises to the cytoplasm. The enzyme catalyses tRNA(Leu) + L-leucine + ATP = L-leucyl-tRNA(Leu) + AMP + diphosphate. This is Leucine--tRNA ligase from Vibrio cholerae serotype O1 (strain ATCC 39541 / Classical Ogawa 395 / O395).